Here is a 1433-residue protein sequence, read N- to C-terminus: DNA-directed RNA polymerase subunit beta' (1433 aa).

Zn(2+)-binding residues include C66, C68, C81, and C84. D473, D475, and D477 together coordinate Mg(2+). Zn(2+) contacts are provided by C815, C889, C896, and C899.

This sequence belongs to the RNA polymerase beta' chain family. In terms of assembly, the RNAP catalytic core consists of 2 alpha, 1 beta, 1 beta' and 1 omega subunit. When a sigma factor is associated with the core the holoenzyme is formed, which can initiate transcription. Mg(2+) serves as cofactor. Zn(2+) is required as a cofactor.

It catalyses the reaction RNA(n) + a ribonucleoside 5'-triphosphate = RNA(n+1) + diphosphate. In terms of biological role, DNA-dependent RNA polymerase catalyzes the transcription of DNA into RNA using the four ribonucleoside triphosphates as substrates. This Porphyromonas gingivalis (strain ATCC BAA-308 / W83) protein is DNA-directed RNA polymerase subunit beta'.